We begin with the raw amino-acid sequence, 310 residues long: NADH-cytochrome b5 reductase 1 (310 aa).

The chain crosses the membrane as a helical span at residues 30-50; the sequence is WVPFAVALAAGFVAWKLSVGG. Residues 61–166 enclose the FAD-binding FR-type domain; that stretch reads NEFQNFVLKE…RGPKGAMVYT (106 aa). Residues 146 to 160 and 172 to 209 each bind FAD; these read TTLK…RGPK and HIGM…QVDL.

It belongs to the flavoprotein pyridine nucleotide cytochrome reductase family. In terms of assembly, monomer. Component of the 2-(3-amino-3-carboxypropyl)histidine synthase complex composed of dph1, dph2, dph3 and a NADH-dependent reductase, predominantly cbr1. FAD serves as cofactor.

It is found in the mitochondrion outer membrane. The enzyme catalyses 2 Fe(III)-[cytochrome b5] + NADH = 2 Fe(II)-[cytochrome b5] + NAD(+) + H(+). It catalyses the reaction 2 Fe(3+)-[Dph3] + NADH = 2 Fe(2+)-[Dph3] + NAD(+) + H(+). Its pathway is protein modification; peptidyl-diphthamide biosynthesis. NADH-dependent reductase for dph3 and cytochrome b5. Required for the first step of diphthamide biosynthesis, a post-translational modification of histidine which occurs in elongation factor 2. Dph1 and dph2 transfer a 3-amino-3-carboxypropyl (ACP) group from S-adenosyl-L-methionine (SAM) to a histidine residue, the reaction is assisted by a reduction system comprising dph3 and a NADH-dependent reductase, predominantly cbr1. By reducing dph3, also involved in the formation of the tRNA wobble base modification mcm5s 2U (5-methoxycarbonylmethyl-2-thiouridine), mediated by the elongator complex. The cytochrome b5/NADH cytochrome b5 reductase electron transfer system supports the catalytic activity of several sterol biosynthetic enzymes. This chain is NADH-cytochrome b5 reductase 1 (cbr1), found in Emericella nidulans (strain FGSC A4 / ATCC 38163 / CBS 112.46 / NRRL 194 / M139) (Aspergillus nidulans).